The chain runs to 132 residues: Small ribosomal subunit protein uS8c (132 aa).

The protein belongs to the universal ribosomal protein uS8 family. As to quaternary structure, part of the 30S ribosomal subunit.

It localises to the plastid. The protein resides in the chloroplast. Functionally, one of the primary rRNA binding proteins, it binds directly to 16S rRNA central domain where it helps coordinate assembly of the platform of the 30S subunit. The protein is Small ribosomal subunit protein uS8c (rps8) of Anthoceros angustus (Hornwort).